Here is a 301-residue protein sequence, read N- to C-terminus: Glycine--tRNA ligase alpha subunit (301 aa).

This sequence belongs to the class-II aminoacyl-tRNA synthetase family. As to quaternary structure, tetramer of two alpha and two beta subunits.

The protein resides in the cytoplasm. The catalysed reaction is tRNA(Gly) + glycine + ATP = glycyl-tRNA(Gly) + AMP + diphosphate. The polypeptide is Glycine--tRNA ligase alpha subunit (Shewanella denitrificans (strain OS217 / ATCC BAA-1090 / DSM 15013)).